We begin with the raw amino-acid sequence, 601 residues long: Deuterosome assembly protein 1 (601 aa).

Coiled coils occupy residues 14–59, 86–197, and 226–278; these read CEAE…NAQT, TQNY…KQQR, and IEKL…LQSR. Disordered stretches follow at residues 115–135 and 188–213; these read MKQN…PFEL and QTQL…CESS. Over residues 121-131 the composition is skewed to basic and acidic residues; it reads HRKEASNKDET. A disordered region spans residues 307–326; it reads DNRKRVESSYSPSTKEPERK. A coiled-coil region spans residues 340–397; that stretch reads HEKELNKMRSQLYQEEDLCSEQERMRNEISELTQELHQKEVTIATIMKKAALLERQLK. Residue serine 544 is modified to Phosphoserine. The stretch at 555-586 forms a coiled coil; it reads AAQHFLMEEEKRAKELEKLLNTHIDELQRHTE.

This sequence belongs to the CEP63 family. In terms of assembly, interacts with CEP152; the interaction is mutually exclusive with CEP63.

It localises to the cytoplasm. Its function is as follows. Key structural component of the deuterosome, a structure that promotes de novo centriole amplification in multiciliated cells. Deuterosome-mediated centriole amplification occurs in terminally differentiated multiciliated cells and can generate more than 100 centrioles. Probably sufficient for the specification and formation of the deuterosome inner core. Interacts with CEP152 and recruits PLK4 to activate centriole biogenesis. The polypeptide is Deuterosome assembly protein 1 (Rattus norvegicus (Rat)).